Reading from the N-terminus, the 274-residue chain is uncharacterized protein (274 aa).

An N-terminal signal peptide occupies residues 1–30 (MTIDTPAREDQTLAATHRAMWALGDYALMA).

The protein to M.tuberculosis Rv1403c.

This is an uncharacterized protein from Mycobacterium bovis (strain ATCC BAA-935 / AF2122/97).